A 572-amino-acid polypeptide reads, in one-letter code: NADP-dependent malic enzyme (572 aa).

N-acetylmethionine is present on Met1. The active-site Proton donor is the Tyr102. An NADP(+)-binding site is contributed by Arg155. Lys173 acts as the Proton acceptor in catalysis. A divalent metal cation-binding residues include Glu245, Asp246, and Asp269. Residues Asp269 and 301–318 (GAGE…MAME) contribute to the NADP(+) site. Ser336 carries the phosphoserine modification. Asn408 contacts NADP(+).

Belongs to the malic enzymes family. As to quaternary structure, homotetramer. Requires Mg(2+) as cofactor. Mn(2+) is required as a cofactor. In terms of tissue distribution, ubiquitous. Up-regulated by 3,5,3'-triiodo-L-thyronine in the liver, kidney and heart.

Its subcellular location is the cytoplasm. It catalyses the reaction (S)-malate + NADP(+) = pyruvate + CO2 + NADPH. The enzyme catalyses oxaloacetate + H(+) = pyruvate + CO2. Its function is as follows. Catalyzes the oxidative decarboxylation of (S)-malate in the presence of NADP(+) and divalent metal ions, and decarboxylation of oxaloacetate. This chain is NADP-dependent malic enzyme (Me1), found in Rattus norvegicus (Rat).